The following is a 125-amino-acid chain: Synaptobrevin (125 aa).

Residues 1-46 (MSGPQNPQAGPGGPPSGPPQPGGPPGPPQGPPQPVQQSKRLQQTQA) are disordered. Topologically, residues 1-103 (MSGPQNPQAG…KRKFWWKNCK (103 aa)) are cytoplasmic. Pro residues predominate over residues 12–34 (GGPPSGPPQPGGPPGPPQGPPQP). A v-SNARE coiled-coil homology domain is found at 40-100 (RLQQTQAQVE…GKLKRKFWWK (61 aa)). Residues 104–123 (MMIILGGIVAVIVTVIIVWA) traverse the membrane as a helical; Anchor for type IV membrane protein segment. At 124-125 (AT) the chain is on the vesicular side.

Belongs to the synaptobrevin family.

Its subcellular location is the cytoplasmic vesicle. It localises to the secretory vesicle. It is found in the synaptic vesicle membrane. The protein localises to the synapse. The protein resides in the synaptosome. Functionally, intrinsic membrane protein of small synaptic vesicles. The chain is Synaptobrevin from Doryteuthis pealeii (Longfin inshore squid).